The chain runs to 435 residues: 3-phosphoshikimate 1-carboxyvinyltransferase (435 aa).

Lys22, Ser23, and Arg27 together coordinate 3-phosphoshikimate. Lys22 contacts phosphoenolpyruvate. Phosphoenolpyruvate is bound by residues Gly94 and Arg122. 3-phosphoshikimate is bound by residues Ser166, Gln168, Asp314, and Lys341. Gln168 is a phosphoenolpyruvate binding site. Residue Asp314 is the Proton acceptor of the active site. Phosphoenolpyruvate-binding residues include Arg345 and Arg388.

It belongs to the EPSP synthase family. Monomer.

Its subcellular location is the cytoplasm. It carries out the reaction 3-phosphoshikimate + phosphoenolpyruvate = 5-O-(1-carboxyvinyl)-3-phosphoshikimate + phosphate. The protein operates within metabolic intermediate biosynthesis; chorismate biosynthesis; chorismate from D-erythrose 4-phosphate and phosphoenolpyruvate: step 6/7. Catalyzes the transfer of the enolpyruvyl moiety of phosphoenolpyruvate (PEP) to the 5-hydroxyl of shikimate-3-phosphate (S3P) to produce enolpyruvyl shikimate-3-phosphate and inorganic phosphate. The sequence is that of 3-phosphoshikimate 1-carboxyvinyltransferase from Vesicomyosocius okutanii subsp. Calyptogena okutanii (strain HA).